A 311-amino-acid chain; its full sequence is Olfactory receptor 10G7 (311 aa).

The Extracellular segment spans residues 1–23; sequence MSNATLLTAFILTGLPHAPGLDA. N-linked (GlcNAc...) asparagine glycosylation occurs at asparagine 3. The chain crosses the membrane as a helical span at residues 24-44; that stretch reads PLFGIFLVVYVLTVLGNLLIL. At 45-52 the chain is on the cytoplasmic side; it reads LVIRVDSH. A helical transmembrane segment spans residues 53–73; it reads LHTPMYYFLTNLSFIDMWFST. Residues 74–98 lie on the Extracellular side of the membrane; that stretch reads VTVPKMLMTLVSPSGRTISFHSCVA. Cysteine 96 and cysteine 188 are joined by a disulfide. The helical transmembrane segment at 99–119 threads the bilayer; it reads QLYFFHFLGSTECFLYTVMSY. The Cytoplasmic segment spans residues 120 to 138; it reads DRYLAISYPLRYTNMMTGR. A helical membrane pass occupies residues 139-159; sequence SCALLATGTWLSGSLHSAVQT. Residues 160 to 196 are Extracellular-facing; that stretch reads ILTFHLPYCGPNQIQHYFCDAPPILKLACADTSANEM. A helical transmembrane segment spans residues 197 to 216; the sequence is VIFVNIGLVASGCFVLIVLS. Residues 217 to 236 lie on the Cytoplasmic side of the membrane; the sequence is YVSIVCSILRIRTSEGRHRA. Residues 237–257 traverse the membrane as a helical segment; sequence FQTCASHCIVVLCFFGPGLFI. At 258-268 the chain is on the extracellular side; that stretch reads YLRPGSRDALH. The chain crosses the membrane as a helical span at residues 269–289; the sequence is GVVAVFYTTLTPLFNPVVYTL. Residues 290–311 are Cytoplasmic-facing; sequence RNKEVKKALLKLKNGSVFAQGE.

Belongs to the G-protein coupled receptor 1 family.

It is found in the cell membrane. In terms of biological role, odorant receptor. This is Olfactory receptor 10G7 (OR10G7) from Homo sapiens (Human).